The following is a 718-amino-acid chain: Exostosin-2 (718 aa).

Residues 1-25 (MCASVKYNIRGPALIPRMKTKHRIY) lie on the Cytoplasmic side of the membrane. A helical; Signal-anchor for type II membrane protein membrane pass occupies residues 26 to 46 (YITLFSIVLLGLIATGMFQFW). Residues 47–718 (PHSIESSNDW…LKSFPNIGSL (672 aa)) lie on the Lumenal side of the membrane. 4 disulfides stabilise this stretch: Cys-85-Cys-90, Cys-96-Cys-151, Cys-286-Cys-300, and Cys-318-Cys-339. Asn-288 carries N-linked (GlcNAc...) asparagine glycosylation. Residues Leu-461, Arg-465, Asn-490, and Asn-517 each coordinate UDP. The UDP-N-acetyl-alpha-D-glucosamine site is built by Arg-465, Asn-490, Asn-517, Arg-522, Asp-538, Asp-539, and Asp-540. The UDP site is built by Asp-538 and Asp-539. Position 540 (Asp-540) interacts with Mn(2+). A protein contacts are provided by Tyr-582 and Ser-584. Cys-626 and Cys-676 are joined by a disulfide. UDP-N-acetyl-alpha-D-glucosamine contacts are provided by Glu-627 and Asp-628. Asn-637 carries an N-linked (GlcNAc...) asparagine glycan. A protein-binding residues include Lys-651 and Lys-653. Position 673 (Arg-673) interacts with UDP-N-acetyl-alpha-D-glucosamine.

Belongs to the glycosyltransferase 47 family. In terms of assembly, part of the heparan sulfate polymerase, a dimeric complex composed of EXT1 and EXT2. Could also form homooligomeric complexes. Interacts with NDST1. Interacts with GALNT5. The cofactor is Mn(2+). In terms of processing, N-glycosylated at Asn-637. Post-translationally, a soluble form is generated by proteolytic processing. As to expression, widely expressed.

It localises to the golgi apparatus membrane. The protein localises to the golgi apparatus. Its subcellular location is the cis-Golgi network membrane. It is found in the endoplasmic reticulum membrane. The protein resides in the secreted. It catalyses the reaction 3-O-{[(1-&gt;4)-beta-D-GlcA-(1-&gt;4)-alpha-D-GlcNAc](n)-(1-&gt;4)-beta-D-GlcA-(1-&gt;3)-beta-D-Gal-(1-&gt;3)-beta-D-Gal-(1-&gt;4)-beta-D-Xyl}-L-seryl-[protein] + UDP-N-acetyl-alpha-D-glucosamine = 3-O-{alpha-D-GlcNAc-[(1-&gt;4)-beta-D-GlcA-(1-&gt;4)-alpha-D-GlcNAc](n)-(1-&gt;4)-beta-D-GlcA-(1-&gt;3)-beta-D-Gal-(1-&gt;3)-beta-D-Gal-(1-&gt;4)-beta-D-Xyl}-L-seryl-[protein] + UDP + H(+). It participates in protein modification; protein glycosylation. Glycosyltransferase forming with EXT1 the heterodimeric heparan sulfate polymerase which catalyzes the elongation of the heparan sulfate glycan backbone. Glycan backbone extension consists in the alternating transfer of (1-&gt;4)-beta-D-GlcA and (1-&gt;4)-alpha-D-GlcNAc residues from their respective UDP-sugar donors. Both EXT1 and EXT2 are required for the full activity of the polymerase since EXT1 bears the N-acetylglucosaminyl-proteoglycan 4-beta-glucuronosyltransferase activity within the complex while EXT2 carries the glucuronosyl-N-acetylglucosaminyl-proteoglycan 4-alpha-N-acetylglucosaminyltransferase activity. Heparan sulfate proteoglycans are ubiquitous components of the extracellular matrix and play an important role in tissue homeostasis and signaling. This chain is Exostosin-2, found in Homo sapiens (Human).